The chain runs to 101 residues: Small ribosomal subunit protein uS14 (101 aa).

The interval 49–70 (QSLPRDSSPSRQRNRCNQTGRP) is disordered. Residues 52-68 (PRDSSPSRQRNRCNQTG) show a composition bias toward polar residues.

This sequence belongs to the universal ribosomal protein uS14 family. In terms of assembly, part of the 30S ribosomal subunit. Contacts proteins S3 and S10.

Its function is as follows. Binds 16S rRNA, required for the assembly of 30S particles and may also be responsible for determining the conformation of the 16S rRNA at the A site. The chain is Small ribosomal subunit protein uS14 from Yersinia pseudotuberculosis serotype O:1b (strain IP 31758).